The following is a 124-amino-acid chain: Small ribosomal subunit protein uS12 (124 aa).

Residues 1–28 (MPTIQQLIRTERQSSKAKTKSPALKSCP) are disordered. 3-methylthioaspartic acid is present on Asp-89. Residues 104 to 124 (TAGVKDRRQSRSKYGAKTPKE) form a disordered region.

Belongs to the universal ribosomal protein uS12 family. As to quaternary structure, part of the 30S ribosomal subunit. Contacts proteins S8 and S17. May interact with IF1 in the 30S initiation complex.

In terms of biological role, with S4 and S5 plays an important role in translational accuracy. Functionally, interacts with and stabilizes bases of the 16S rRNA that are involved in tRNA selection in the A site and with the mRNA backbone. Located at the interface of the 30S and 50S subunits, it traverses the body of the 30S subunit contacting proteins on the other side and probably holding the rRNA structure together. The combined cluster of proteins S8, S12 and S17 appears to hold together the shoulder and platform of the 30S subunit. This chain is Small ribosomal subunit protein uS12, found in Synechococcus sp. (strain WH7803).